A 472-amino-acid polypeptide reads, in one-letter code: Glycosyl hydrolase family 109 protein (472 aa).

Residues 1–35 (MSQTPAVSRRLLLGSAAATGALATGIGSAAPVAAA) constitute a signal peptide (tat-type signal). NAD(+)-binding positions include 68–69 (NR), Asp90, 139–142 (WEFH), His145, 159–160 (EL), and Asn188. Substrate is bound by residues Tyr217, Arg236, 248-251 (YPMH), and Tyr330. Tyr248 lines the NAD(+) pocket.

Belongs to the Gfo/Idh/MocA family. Glycosyl hydrolase 109 subfamily. It depends on NAD(+) as a cofactor. In terms of processing, predicted to be exported by the Tat system. The position of the signal peptide cleavage has not been experimentally proven.

Its function is as follows. Glycosidase. Has no alpha-N-acetylgalactosaminidase activity. The protein is Glycosyl hydrolase family 109 protein of Streptomyces coelicolor (strain ATCC BAA-471 / A3(2) / M145).